A 168-amino-acid polypeptide reads, in one-letter code: Lipid transfer protein EARLI 1 (168 aa).

The signal sequence occupies residues 1–25 (MASKNSASIALFFALNIIFFTLTAA). A disordered region spans residues 32 to 81 (PSPKHKPVPSPKPKPVPSPKPKPVPSPSVPSPSVPSPNPRPVTPPRTPGS). The A-1 repeat unit spans residues 34–41 (PKHKPVPS). Residues 34–57 (PKHKPVPSPKPKPVPSPKPKPVPS) are 3 X 8 AA repeats A of P-K-[HP]-K-P-V-P-S. Residues 39 to 78 (VPSPKPKPVPSPKPKPVPSPSVPSPSVPSPNPRPVTPPRT) are compositionally biased toward pro residues. One copy of the A-2 repeat lies at 42–49 (PKPKPVPS). An A-3 repeat occupies 50-57 (PKPKPVPS). The B-1 repeat unit spans residues 58–62 (PSVPS). The 2 X 58 AA tandem repeats B of P-S-V-P-S stretch occupies residues 58 to 67 (PSVPSPSVPS). The B-2 repeat unit spans residues 63-67 (PSVPS).

It belongs to the plant LTP family. PEARLI1 subfamily. As to expression, mostly expressed in aerial part of seedlings, and, to a lower extent, in roots. Higher basal levels in early-flowering ecotypes.

It localises to the secreted. The protein resides in the cell wall. In terms of biological role, probable lipid transfer protein (LTP). May improve freezing survival. Seems to control the flowering process and lignin synthesis. Has an auxiliary role for germinability and early seedling development under low temperature and salt stress conditions, probably in an abscisic acid- (ABA) dependent manner. Confers resistance to Botrytis cinerea and exhibits anti-fungal activity, at least against S.cerevisiae, B.cinerea and Fusarium oxysporum, probably by increasing their membrane permeability. The protein is Lipid transfer protein EARLI 1 (EARLI1) of Arabidopsis thaliana (Mouse-ear cress).